The following is a 112-amino-acid chain: Class I hydrophobin 7 (112 aa).

A signal peptide spans 1–23 (MFARQATSVSAFLVLTLSLFAAA). Intrachain disulfides connect Cys-36-Cys-93, Cys-43-Cys-87, Cys-44-Cys-74, and Cys-94-Cys-107. N-linked (GlcNAc...) asparagine glycosylation occurs at Asn-96.

This sequence belongs to the fungal hydrophobin family. In terms of assembly, self-assembles to form functional amyloid fibrils called rodlets. Self-assembly into fibrillar rodlets occurs spontaneously at hydrophobic:hydrophilic interfaces and the rodlets further associate laterally to form amphipathic monolayers.

It localises to the secreted. The protein resides in the cell wall. Aerial growth, conidiation, and dispersal of filamentous fungi in the environment rely upon a capability of their secreting small amphipathic proteins called hydrophobins (HPBs) with low sequence identity. Class I can self-assemble into an outermost layer of rodlet bundles on aerial cell surfaces, conferring cellular hydrophobicity that supports fungal growth, development and dispersal; whereas Class II form highly ordered films at water-air interfaces through intermolecular interactions but contribute nothing to the rodlet structure. This chain is Class I hydrophobin 7, found in Flammulina velutipes (Agaricus velutipes).